Reading from the N-terminus, the 147-residue chain is Deoxyuridine 5'-triphosphate nucleotidohydrolase (147 aa).

Arginine 24 contributes to the Mg(2+) binding site. DUTP contacts are provided by residues 68–70 (PRS), 82–85 (GVID), tyrosine 88, glycine 93, isoleucine 95, and arginine 111.

This sequence belongs to the dUTPase family. Mg(2+) is required as a cofactor.

It carries out the reaction dUTP + H2O = dUMP + diphosphate + H(+). Its function is as follows. This enzyme is involved in nucleotide metabolism: it produces dUMP, the immediate precursor of thymidine nucleotides and it decreases the intracellular concentration of dUTP so that uracil cannot be incorporated into DNA. This chain is Deoxyuridine 5'-triphosphate nucleotidohydrolase (OPG046), found in Camelus.